We begin with the raw amino-acid sequence, 527 residues long: Rhamnogalacturonate lyase A (527 aa).

The signal sequence occupies residues 1 to 19 (MLKASLLSFVAFTAQVAHA). 2 disulfide bridges follow: C49/C92 and C183/C192. N350 is a glycosylation site (N-linked (GlcNAc...) asparagine).

It belongs to the polysaccharide lyase 4 family.

Its subcellular location is the secreted. The catalysed reaction is Endotype eliminative cleavage of L-alpha-rhamnopyranosyl-(1-&gt;4)-alpha-D-galactopyranosyluronic acid bonds of rhamnogalacturonan I domains in ramified hairy regions of pectin leaving L-rhamnopyranose at the reducing end and 4-deoxy-4,5-unsaturated D-galactopyranosyluronic acid at the non-reducing end.. Functionally, pectinolytic enzyme that has a positive effect in the apple hot-mash liquefaction process. This endolyase hydrolyzes the alpha-L-rhamnopyranosyl-(1,4)-alpha-D-galacturonopyranosyl glycosidic linkage by beta-elimination, thereby generating oligosaccharides terminating at the non-reducing end with a hex-4-enopyranosyluronic acid residue. The chain is Rhamnogalacturonate lyase A (rglA) from Aspergillus aculeatus.